A 434-amino-acid chain; its full sequence is Trigger factor (434 aa).

One can recognise a PPIase FKBP-type domain in the interval 160 to 245 (GDKVKMNFVG…LTEVQAANLP (86 aa)).

The protein belongs to the FKBP-type PPIase family. Tig subfamily.

It is found in the cytoplasm. It carries out the reaction [protein]-peptidylproline (omega=180) = [protein]-peptidylproline (omega=0). In terms of biological role, involved in protein export. Acts as a chaperone by maintaining the newly synthesized protein in an open conformation. Functions as a peptidyl-prolyl cis-trans isomerase. This is Trigger factor from Shewanella sp. (strain W3-18-1).